The chain runs to 363 residues: DNA replication and repair protein RecF (363 aa).

An ATP-binding site is contributed by 30–37 (GDNAQGKT).

This sequence belongs to the RecF family.

The protein resides in the cytoplasm. In terms of biological role, the RecF protein is involved in DNA metabolism; it is required for DNA replication and normal SOS inducibility. RecF binds preferentially to single-stranded, linear DNA. It also seems to bind ATP. This chain is DNA replication and repair protein RecF, found in Lachnospira eligens (strain ATCC 27750 / DSM 3376 / VPI C15-48 / C15-B4) (Eubacterium eligens).